We begin with the raw amino-acid sequence, 258 residues long: uncharacterized protein (258 aa).

4 consecutive transmembrane segments (helical) span residues 33–53 (LFVI…VTTN), 59–79 (FDSW…IFVF), 88–108 (LLYL…FSFF), and 140–160 (IIAL…WLIQ). The segment at 237–258 (NNKINSELQPPSILNKNSKPIE) is disordered. Over residues 242 to 258 (SELQPPSILNKNSKPIE) the composition is skewed to polar residues.

It localises to the membrane. This is an uncharacterized protein from Dictyostelium discoideum (Social amoeba).